The sequence spans 149 residues: Cyanate hydratase (149 aa).

Catalysis depends on residues Arg-90, Glu-93, and Ser-116.

It belongs to the cyanase family.

The enzyme catalyses cyanate + hydrogencarbonate + 3 H(+) = NH4(+) + 2 CO2. In terms of biological role, catalyzes the reaction of cyanate with bicarbonate to produce ammonia and carbon dioxide. The polypeptide is Cyanate hydratase (Synechocystis sp. (strain ATCC 27184 / PCC 6803 / Kazusa)).